A 185-amino-acid polypeptide reads, in one-letter code: Threonylcarbamoyl-AMP synthase (185 aa).

Residues 4 to 185 enclose the YrdC-like domain; sequence SFRAQCAARV…LVTGQVIRPA (182 aa).

Belongs to the SUA5 family. TsaC subfamily.

The protein localises to the cytoplasm. It carries out the reaction L-threonine + hydrogencarbonate + ATP = L-threonylcarbamoyladenylate + diphosphate + H2O. In terms of biological role, required for the formation of a threonylcarbamoyl group on adenosine at position 37 (t(6)A37) in tRNAs that read codons beginning with adenine. Catalyzes the conversion of L-threonine, HCO(3)(-)/CO(2) and ATP to give threonylcarbamoyl-AMP (TC-AMP) as the acyladenylate intermediate, with the release of diphosphate. In Pseudomonas paraeruginosa (strain DSM 24068 / PA7) (Pseudomonas aeruginosa (strain PA7)), this protein is Threonylcarbamoyl-AMP synthase.